Reading from the N-terminus, the 164-residue chain is Ribosome maturation factor RimP (164 aa).

The protein belongs to the RimP family.

The protein resides in the cytoplasm. Its function is as follows. Required for maturation of 30S ribosomal subunits. This chain is Ribosome maturation factor RimP, found in Mycoplasma mycoides subsp. mycoides SC (strain CCUG 32753 / NCTC 10114 / PG1).